Consider the following 254-residue polypeptide: Thiazole synthase (254 aa).

Residue K96 is the Schiff-base intermediate with DXP of the active site. Residues G157, 183–184 (AG), and 205–206 (NT) contribute to the 1-deoxy-D-xylulose 5-phosphate site.

Belongs to the ThiG family. As to quaternary structure, homotetramer. Forms heterodimers with either ThiH or ThiS.

The protein resides in the cytoplasm. It catalyses the reaction [ThiS sulfur-carrier protein]-C-terminal-Gly-aminoethanethioate + 2-iminoacetate + 1-deoxy-D-xylulose 5-phosphate = [ThiS sulfur-carrier protein]-C-terminal Gly-Gly + 2-[(2R,5Z)-2-carboxy-4-methylthiazol-5(2H)-ylidene]ethyl phosphate + 2 H2O + H(+). It participates in cofactor biosynthesis; thiamine diphosphate biosynthesis. Functionally, catalyzes the rearrangement of 1-deoxy-D-xylulose 5-phosphate (DXP) to produce the thiazole phosphate moiety of thiamine. Sulfur is provided by the thiocarboxylate moiety of the carrier protein ThiS. In vitro, sulfur can be provided by H(2)S. This chain is Thiazole synthase, found in Clostridium perfringens (strain 13 / Type A).